Reading from the N-terminus, the 109-residue chain is Irditoxin subunit A (109 aa).

The signal sequence occupies residues 1–19; that stretch reads MKTLLLAVAVVAFVCLGSA. A propeptide spanning residues 20 to 34 is cleaved from the precursor; the sequence is DQLGLGRQQIDWGQG. Gln-35 bears the Pyrrolidone carboxylic acid mark. 5 disulfide bridges follow: Cys-44–Cys-66, Cys-47–Cys-55, Cys-61–Cys-85, Cys-89–Cys-100, and Cys-101–Cys-106.

The protein belongs to the three-finger toxin family. Ancestral subfamily. Boigatoxin sub-subfamily. Heterodimer of A and B chains; disulfide-linked. Expressed by the venom gland.

Its subcellular location is the secreted. This bird and reptile-specific postsynaptic neurotoxin inhibits the chick muscle alpha-1-beta-1-gamma-delta (CHRNA1-CHRNB1-CHRNG-CHNRD) nicotinic acetylcholine receptor (nAChR) 100-fold more compared with the mouse receptor. In vivo, produces rapid flaccid paralysis, dyspnea and increased respiratory rate in geckos. At sublethal doses geckos were immobilized for up to three days and then recovered. Chicks injected with lethal doses showed rapid onset of inactivity, dyspnea and neck droop, and no extended paralysis with survival was seen. The sequence is that of Irditoxin subunit A from Boiga irregularis (Brown tree snake).